The chain runs to 1132 residues: Telomerase reverse transcriptase (1132 aa).

Residues 1–230 (MPRAPRCRAV…ARRRGGSASR (230 aa)) are RNA-interacting domain 1. The interval 58–197 (VPWDARPPPA…PHASGPRRRL (140 aa)) is GQ motif. The segment at 137–141 (WGLLL) is required for regulating specificity for telomeric DNA and for processivity for primer elongation. A disordered region spans residues 210–320 (AGVPLGLPAP…SRPPRPWDTP (111 aa)). Residues 213–234 (PLGLPAPGARRRGGSASRSLPL) are compositionally biased toward low complexity. The Bipartite nuclear localization signal signature appears at 222-240 (RRRGGSASRSLPLPKRPRR). A Phosphoserine; by PKB/AKT1 modification is found at Ser-227. The linker stretch occupies residues 231 to 324 (SLPLPKRPRR…RPWDTPCPPV (94 aa)). A compositionally biased stretch (basic residues) spans 293–304 (RHSHPSVGRQHH). Residues 301 to 538 (RQHHAGPPST…VPAAEHRLRE (238 aa)) are required for oligomerization. Residues 310 to 320 (TSRPPRPWDTP) show a composition bias toward pro residues. Positions 325–550 (YAETKHFLYS…LAKFLHWLMS (226 aa)) are RNA-interacting domain 2. The short motif at 328 to 333 (TKHFLY) is the TFLY; involved in RNA binding element. The QFP motif stretch occupies residues 376-521 (PRRLPRLPQR…MSVRDCAWLR (146 aa)). The segment at 397 to 417 (LGNHAQCPYGVLLKTHCPLRA) is CP motif. Ser-457 is subject to Phosphoserine; by DYRK2. One can recognise a Reverse transcriptase domain in the interval 605 to 935 (EVRQHREARP…GLFPWCGLLL (331 aa)). The residue at position 707 (Tyr-707) is a Phosphotyrosine; by SRC-type Tyr-kinases. The Mg(2+) site is built by Asp-712, Asp-868, and Asp-869. The tract at residues 914–928 (LGGTAFVQMPAHGLF) is required for oligomerization. A primer grip sequence region spans residues 930–934 (WCGLL). The tract at residues 936-1132 (DTRTLEVQSD…LPSDFKTILD (197 aa)) is CTE.

The protein belongs to the reverse transcriptase family. Telomerase subfamily. In terms of assembly, catalytic component of the telomerase holoenzyme complex composed of one molecule of TERT, one molecule of WRAP53/TCAB1, two molecules of H/ACA ribonucleoprotein complex subunits DKC1, NOP10, NHP2 and GAR1, and a telomerase RNA template component (TERC). The telomerase holoenzyme complex is associated with TEP1, SMG6/EST1A and POT1. The molecular chaperone HSP90/P23 complex is required for correct assembly and stabilization of the active telomerase. Interacts directly with HSP90A and PTGES3. Interacts with HSPA1A; the interaction occurs in the absence of TERC and dissociates once the complex has formed. Interacts with RAN; the interaction promotes nuclear export of TERT. Interacts with XPO1. Interacts with PTPN11; the interaction retains TERT in the nucleus. Interacts with NCL (via RRM1 and C-terminal RRM4/Arg/Gly-rich domains); the interaction is important for nucleolar localization of TERT. Interacts with SMARCA4 (via the bromodomain); the interaction regulates Wnt-mediated signaling. Interacts with MCRS1 (isoform MCRS2); the interaction inhibits in vitro telomerase activity. Interacts with PIF1; the interaction has no effect on the elongation activity of TERT. Interacts with PML; the interaction recruits TERT to PML bodies and inhibits telomerase activity. Interacts with GNL3L. Interacts with isoform 1 and isoform 2 of NVL. Interacts with DHX36. Interacts with ATF7. In terms of processing, phosphorylation at Tyr-707 under oxidative stress leads to translocation of TERT to the cytoplasm and reduces its antiapoptotic activity. Dephosphorylated by SHP2/PTPN11 leading to nuclear retention. Phosphorylation at Ser-227 by the AKT pathway promotes nuclear location. Phosphorylation at the G2/M phase at Ser-457 by DYRK2 promotes ubiquitination by the EDVP complex and degradation. Post-translationally, ubiquitinated by the EDVP complex, a E3 ligase complex following phosphorylation at Ser-457 by DYRK2. Ubiquitinated leads to proteasomal degradation. (Microbial infection) In case of infection by HIV-1, the EDVP complex is hijacked by HIV-1 via interaction between HIV-1 Vpr and DCAF1/VPRBP, leading to ubiquitination and degradation. As to expression, expressed at a high level in thymocyte subpopulations, at an intermediate level in tonsil T-lymphocytes, and at a low to undetectable level in peripheral blood T-lymphocytes.

It localises to the nucleus. It is found in the nucleolus. The protein localises to the nucleoplasm. Its subcellular location is the chromosome. The protein resides in the telomere. It localises to the cytoplasm. It is found in the PML body. The catalysed reaction is DNA(n) + a 2'-deoxyribonucleoside 5'-triphosphate = DNA(n+1) + diphosphate. In terms of biological role, telomerase is a ribonucleoprotein enzyme essential for the replication of chromosome termini in most eukaryotes. Active in progenitor and cancer cells. Inactive, or very low activity, in normal somatic cells. Catalytic component of the teleromerase holoenzyme complex whose main activity is the elongation of telomeres by acting as a reverse transcriptase that adds simple sequence repeats to chromosome ends by copying a template sequence within the RNA component of the enzyme. Catalyzes the RNA-dependent extension of 3'-chromosomal termini with the 6-nucleotide telomeric repeat unit, 5'-TTAGGG-3'. The catalytic cycle involves primer binding, primer extension and release of product once the template boundary has been reached or nascent product translocation followed by further extension. More active on substrates containing 2 or 3 telomeric repeats. Telomerase activity is regulated by a number of factors including telomerase complex-associated proteins, chaperones and polypeptide modifiers. Modulates Wnt signaling. Plays important roles in aging and antiapoptosis. This is Telomerase reverse transcriptase (TERT) from Homo sapiens (Human).